The following is a 221-amino-acid chain: ATP phosphoribosyltransferase (221 aa).

This sequence belongs to the ATP phosphoribosyltransferase family. Short subfamily. In terms of assembly, heteromultimer composed of HisG and HisZ subunits.

The protein resides in the cytoplasm. The catalysed reaction is 1-(5-phospho-beta-D-ribosyl)-ATP + diphosphate = 5-phospho-alpha-D-ribose 1-diphosphate + ATP. It participates in amino-acid biosynthesis; L-histidine biosynthesis; L-histidine from 5-phospho-alpha-D-ribose 1-diphosphate: step 1/9. Its function is as follows. Catalyzes the condensation of ATP and 5-phosphoribose 1-diphosphate to form N'-(5'-phosphoribosyl)-ATP (PR-ATP). Has a crucial role in the pathway because the rate of histidine biosynthesis seems to be controlled primarily by regulation of HisG enzymatic activity. The polypeptide is ATP phosphoribosyltransferase (Rhizorhabdus wittichii (strain DSM 6014 / CCUG 31198 / JCM 15750 / NBRC 105917 / EY 4224 / RW1) (Sphingomonas wittichii)).